We begin with the raw amino-acid sequence, 104 residues long: Disrupted in renal carcinoma protein 1 (104 aa).

The interval 1-23 (MPEAHMQPAKLQTSLPTTDHGSK) is disordered. The segment covering 10–19 (KLQTSLPTTD) has biased composition (polar residues).

Expressed at low steady-state level in adult placenta, testis, ovary, prostate, fetal kidney, spleen and skeletal muscle.

The sequence is that of Disrupted in renal carcinoma protein 1 (DIRC1) from Homo sapiens (Human).